A 121-amino-acid chain; its full sequence is uncharacterized protein (121 aa).

Residues 8–37 (KQLMVCRDEIKKLKLKEKEAKNRILTYLKN) adopt a coiled-coil conformation.

This is an uncharacterized protein from Aedes vexans (Inland floodwater mosquito).